A 683-amino-acid polypeptide reads, in one-letter code: UvrABC system protein B (683 aa).

One can recognise a Helicase ATP-binding domain in the interval 31–414; it reads AGFEKGYKEQ…ELERTDHKVE (384 aa). ATP is bound at residue 44-51; sequence GATGTGKT. The Beta-hairpin signature appears at 97 to 120; the sequence is YYDYYQPEAYVPQSDTYIEKDSAI. In terms of domain architecture, Helicase C-terminal spans 435–601; the sequence is QIDDLVGEIN…TIIKPVHDVI (167 aa). Residues 632–667 enclose the UVR domain; that stretch reads KTMIKNLQEQMKEAAKKLDFEEAANLRDAIMELQSS. The segment at 662–683 is disordered; that stretch reads MELQSSSRRPKTRKGKALNGKR. A compositionally biased stretch (basic residues) spans 669-683; it reads RRPKTRKGKALNGKR.

This sequence belongs to the UvrB family. Forms a heterotetramer with UvrA during the search for lesions. Interacts with UvrC in an incision complex.

Its subcellular location is the cytoplasm. In terms of biological role, the UvrABC repair system catalyzes the recognition and processing of DNA lesions. A damage recognition complex composed of 2 UvrA and 2 UvrB subunits scans DNA for abnormalities. Upon binding of the UvrA(2)B(2) complex to a putative damaged site, the DNA wraps around one UvrB monomer. DNA wrap is dependent on ATP binding by UvrB and probably causes local melting of the DNA helix, facilitating insertion of UvrB beta-hairpin between the DNA strands. Then UvrB probes one DNA strand for the presence of a lesion. If a lesion is found the UvrA subunits dissociate and the UvrB-DNA preincision complex is formed. This complex is subsequently bound by UvrC and the second UvrB is released. If no lesion is found, the DNA wraps around the other UvrB subunit that will check the other stand for damage. The sequence is that of UvrABC system protein B from Lactobacillus acidophilus (strain ATCC 700396 / NCK56 / N2 / NCFM).